The primary structure comprises 324 residues: BURP domain-containing protein 5 (324 aa).

The signal sequence occupies residues Met1–Ala30. The BURP domain maps to Phe109–Arg323.

Expressed in panicles.

The polypeptide is BURP domain-containing protein 5 (BURP5) (Oryza sativa subsp. japonica (Rice)).